Here is a 399-residue protein sequence, read N- to C-terminus: Succinate--CoA ligase [ADP-forming] subunit beta (399 aa).

The 246-residue stretch at 9 to 254 folds into the ATP-grasp domain; the sequence is KAVLQPFGVS…ETEEDAKEIE (246 aa). Residues K46, 53-55, E109, S112, and E117 each bind ATP; that span reads GRG. 2 residues coordinate Mg(2+): N209 and D223. Substrate contacts are provided by residues N274 and 331 to 333; that span reads GIM.

It belongs to the succinate/malate CoA ligase beta subunit family. As to quaternary structure, heterotetramer of two alpha and two beta subunits. It depends on Mg(2+) as a cofactor.

The catalysed reaction is succinate + ATP + CoA = succinyl-CoA + ADP + phosphate. The enzyme catalyses GTP + succinate + CoA = succinyl-CoA + GDP + phosphate. Its pathway is carbohydrate metabolism; tricarboxylic acid cycle; succinate from succinyl-CoA (ligase route): step 1/1. Functionally, succinyl-CoA synthetase functions in the citric acid cycle (TCA), coupling the hydrolysis of succinyl-CoA to the synthesis of either ATP or GTP and thus represents the only step of substrate-level phosphorylation in the TCA. The beta subunit provides nucleotide specificity of the enzyme and binds the substrate succinate, while the binding sites for coenzyme A and phosphate are found in the alpha subunit. This chain is Succinate--CoA ligase [ADP-forming] subunit beta, found in Rhodopseudomonas palustris (strain BisB18).